A 69-amino-acid chain; its full sequence is Large ribosomal subunit protein uL29 (69 aa).

It belongs to the universal ribosomal protein uL29 family.

In Natronomonas pharaonis (strain ATCC 35678 / DSM 2160 / CIP 103997 / JCM 8858 / NBRC 14720 / NCIMB 2260 / Gabara) (Halobacterium pharaonis), this protein is Large ribosomal subunit protein uL29.